Reading from the N-terminus, the 126-residue chain is Fluoride-specific ion channel FluC 1 (126 aa).

3 consecutive transmembrane segments (helical) span residues 37-57, 67-87, and 98-118; these read HWGTLLVNVISSFALGLVLAL, IALLMGVGFFGTLSTFSTFVV, and LLAAAALAVISIVAGLIAAAA. The Na(+) site is built by Gly77 and Ser80.

The protein belongs to the fluoride channel Fluc/FEX (TC 1.A.43) family.

Its subcellular location is the cell inner membrane. It catalyses the reaction fluoride(in) = fluoride(out). With respect to regulation, na(+) is not transported, but it plays an essential structural role and its presence is essential for fluoride channel function. Functionally, fluoride-specific ion channel. Important for reducing fluoride concentration in the cell, thus reducing its toxicity. In Parasynechococcus marenigrum (strain WH8102), this protein is Fluoride-specific ion channel FluC 1.